Reading from the N-terminus, the 91-residue chain is Small ribosomal subunit protein bS16 (91 aa).

This sequence belongs to the bacterial ribosomal protein bS16 family.

The polypeptide is Small ribosomal subunit protein bS16 (Exiguobacterium sp. (strain ATCC BAA-1283 / AT1b)).